Reading from the N-terminus, the 2298-residue chain is Protein Ycf2 (2298 aa).

ATP is bound at residue 1640–1647; the sequence is GSIGTGRS.

Belongs to the Ycf2 family.

The protein localises to the plastid. It localises to the chloroplast stroma. Functionally, probable ATPase of unknown function. Its presence in a non-photosynthetic plant (Epifagus virginiana) and experiments in tobacco indicate that it has an essential function which is probably not related to photosynthesis. The protein is Protein Ycf2 of Carica papaya (Papaya).